A 473-amino-acid chain; its full sequence is Photosystem II CP43 reaction center protein (473 aa).

The propeptide occupies 1 to 14 (MKTLYSLRRFYPVE). T15 carries the N-acetylthreonine modification. T15 is subject to Phosphothreonine. The next 5 membrane-spanning stretches (helical) occupy residues 69–93 (LFEV…PHLA), 134–155 (LLGP…KDRN), 178–200 (KALY…RKIT), 255–275 (KPFA…LSYS), and 291–312 (WFNN…ASQA). E367 lines the [CaMn4O5] cluster pocket. A helical membrane pass occupies residues 447 to 471 (RARAAAAGFEKGIDRDFEPVLSMTP).

It belongs to the PsbB/PsbC family. PsbC subfamily. In terms of assembly, PSII is composed of 1 copy each of membrane proteins PsbA, PsbB, PsbC, PsbD, PsbE, PsbF, PsbH, PsbI, PsbJ, PsbK, PsbL, PsbM, PsbT, PsbX, PsbY, PsbZ, Psb30/Ycf12, at least 3 peripheral proteins of the oxygen-evolving complex and a large number of cofactors. It forms dimeric complexes. Binds multiple chlorophylls and provides some of the ligands for the Ca-4Mn-5O cluster of the oxygen-evolving complex. It may also provide a ligand for a Cl- that is required for oxygen evolution. PSII binds additional chlorophylls, carotenoids and specific lipids. serves as cofactor.

Its subcellular location is the plastid. The protein resides in the chloroplast thylakoid membrane. One of the components of the core complex of photosystem II (PSII). It binds chlorophyll and helps catalyze the primary light-induced photochemical processes of PSII. PSII is a light-driven water:plastoquinone oxidoreductase, using light energy to abstract electrons from H(2)O, generating O(2) and a proton gradient subsequently used for ATP formation. In Lactuca sativa (Garden lettuce), this protein is Photosystem II CP43 reaction center protein.